We begin with the raw amino-acid sequence, 102 residues long: MTTSSSSEPSTMATLFPNFRDQEVQSAVKNLLTYSLVILIVPLASMFLLKQFFFEGLLGVSANDALTYSAIIAVVLVHVVLGIWLFAATKQEDRKKRENKQD.

At Met-1–Thr-33 the chain is on the cytoplasmic side. A helical transmembrane segment spans residues Tyr-34 to Phe-54. Topologically, residues Glu-55 to Thr-67 are lumenal. Residues Tyr-68–Ala-88 form a helical membrane-spanning segment. Residues Thr-89–Asp-102 lie on the Cytoplasmic side of the membrane.

The protein belongs to the VMA21 family.

The protein localises to the endoplasmic reticulum membrane. The protein resides in the endoplasmic reticulum-Golgi intermediate compartment membrane. It localises to the cytoplasmic vesicle. It is found in the COPII-coated vesicle membrane. Required for the assembly of the V0 complex of the vacuolar ATPase (V-ATPase) in the endoplasmic reticulum. This chain is Vacuolar ATPase assembly integral membrane protein VMA21 homolog, found in Caenorhabditis elegans.